We begin with the raw amino-acid sequence, 545 residues long: CTP synthase (545 aa).

Positions 1–265 are amidoligase domain; it reads MNGIKHIFIT…DKFVIKHLDL (265 aa). Ser15 contributes to the CTP binding site. UTP is bound at residue Ser15. ATP contacts are provided by residues 16-21 and Asp73; that span reads SIGKGL. Mg(2+) contacts are provided by Asp73 and Glu141. Residues 148-150, 188-193, and Lys224 each bind CTP; these read DIE and KTKPTQ. Residues 188 to 193 and Lys224 each bind UTP; that span reads KTKPTQ. Residues 290 to 534 enclose the Glutamine amidotransferase type-1 domain; that stretch reads EIAIIGKYTG…VAAALARKEI (245 aa). Gly349 serves as a coordination point for L-glutamine. Cys376 (nucleophile; for glutamine hydrolysis) is an active-site residue. Residues 377–380, Glu400, and Arg460 each bind L-glutamine; that span reads LGMQ. Active-site residues include His507 and Glu509.

Belongs to the CTP synthase family. In terms of assembly, homotetramer.

It catalyses the reaction UTP + L-glutamine + ATP + H2O = CTP + L-glutamate + ADP + phosphate + 2 H(+). The enzyme catalyses L-glutamine + H2O = L-glutamate + NH4(+). It carries out the reaction UTP + NH4(+) + ATP = CTP + ADP + phosphate + 2 H(+). Its pathway is pyrimidine metabolism; CTP biosynthesis via de novo pathway; CTP from UDP: step 2/2. Its activity is regulated as follows. Allosterically activated by GTP, when glutamine is the substrate; GTP has no effect on the reaction when ammonia is the substrate. The allosteric effector GTP functions by stabilizing the protein conformation that binds the tetrahedral intermediate(s) formed during glutamine hydrolysis. Inhibited by the product CTP, via allosteric rather than competitive inhibition. Catalyzes the ATP-dependent amination of UTP to CTP with either L-glutamine or ammonia as the source of nitrogen. Regulates intracellular CTP levels through interactions with the four ribonucleotide triphosphates. The sequence is that of CTP synthase from Tropheryma whipplei (strain TW08/27) (Whipple's bacillus).